A 510-amino-acid polypeptide reads, in one-letter code: NAD(P)H-quinone oxidoreductase subunit 2 B, chloroplastic (510 aa).

The next 13 membrane-spanning stretches (helical) occupy residues 24–44 (LLLFDGSFIFPECILIFGLIL), 57–77 (IPWLYFISSTSLVMSITALLF), 99–119 (IFQFLILLCSTLCIPLSVEYI), 124–144 (MAIAEFLLFVLTATLGGMFLC), 149–169 (LITIFVAPECFSLCSYLLSGY), 183–203 (YLLMGGASSSILVHGFSWLYG), 227–247 (PGISIALIFITVGIGFKLSPA), 295–315 (WHLLLEILAILSMILGNLIAI), 323–343 (MLAYSSIGQIGYVIIGIIVGD), 354–374 (YMLFYISMNLGTFACIVLFGL), 395–415 (ALSLALCLLSLGGLPPLAGFF), 418–438 (LHLFWCGWQAGLYFLVSIGLL), and 484–504 (MIVCVIASTIPGISMNPIIAI).

Belongs to the complex I subunit 2 family. NDH is composed of at least 16 different subunits, 5 of which are encoded in the nucleus.

The protein localises to the plastid. It is found in the chloroplast thylakoid membrane. The catalysed reaction is a plastoquinone + NADH + (n+1) H(+)(in) = a plastoquinol + NAD(+) + n H(+)(out). It carries out the reaction a plastoquinone + NADPH + (n+1) H(+)(in) = a plastoquinol + NADP(+) + n H(+)(out). Its function is as follows. NDH shuttles electrons from NAD(P)H:plastoquinone, via FMN and iron-sulfur (Fe-S) centers, to quinones in the photosynthetic chain and possibly in a chloroplast respiratory chain. The immediate electron acceptor for the enzyme in this species is believed to be plastoquinone. Couples the redox reaction to proton translocation, and thus conserves the redox energy in a proton gradient. The polypeptide is NAD(P)H-quinone oxidoreductase subunit 2 B, chloroplastic (Gossypium hirsutum (Upland cotton)).